Reading from the N-terminus, the 168-residue chain is Protein-export protein SecB (168 aa).

This sequence belongs to the SecB family. Homotetramer, a dimer of dimers. One homotetramer interacts with 1 SecA dimer.

The protein resides in the cytoplasm. In terms of biological role, one of the proteins required for the normal export of preproteins out of the cell cytoplasm. It is a molecular chaperone that binds to a subset of precursor proteins, maintaining them in a translocation-competent state. It also specifically binds to its receptor SecA. This chain is Protein-export protein SecB, found in Sinorhizobium medicae (strain WSM419) (Ensifer medicae).